The sequence spans 599 residues: NADH-ubiquinone oxidoreductase chain 5 (599 aa).

The next 16 helical transmembrane spans lie at 1-21 (MLELWGVLSLTSLGVMVIFLF), 28-48 (FAESVKYAGYMNAVLLSILLM), 81-101 (CFFVVGLYVTWNILMFSFYYM), 115-135 (GLFLIAMLLLVSAESLFQLLI), 171-191 (GDIGLLIMLMWSLVTLGDWSF), 193-213 (GLYALDFVNTFFLLGVVLAAA), 233-253 (TPVSSLLHSSTMVVAGVFLLI), 265-285 (IQLMVFFLGTMTTLFSAICAL), 302-322 (LGLMVTVVAGAGAPQLAFLHI), 323-343 (CMHAFFKAMLFMCSGGFIHGL), 363-383 (SVCFFIGSAALMGVPFLAGFF), 398-420 (NSWAVGLVLIATSFTAAYSVRLL), 455-475 (VIAGVVFIYFLSPNQISCLSL), 481-501 (LAAVFVTLVGGLIAWDVVNLL), 510-530 (IPELAFEAQVGFYPLIMHKLI), and 577-597 (LIKMYIAVMVMMGGLILGIMI).

It belongs to the complex I subunit 5 family.

It is found in the mitochondrion inner membrane. It carries out the reaction a ubiquinone + NADH + 5 H(+)(in) = a ubiquinol + NAD(+) + 4 H(+)(out). In terms of biological role, core subunit of the mitochondrial membrane respiratory chain NADH dehydrogenase (Complex I) that is believed to belong to the minimal assembly required for catalysis. Complex I functions in the transfer of electrons from NADH to the respiratory chain. The immediate electron acceptor for the enzyme is believed to be ubiquinone. This chain is NADH-ubiquinone oxidoreductase chain 5 (ND5), found in Branchiostoma floridae (Florida lancelet).